A 299-amino-acid chain; its full sequence is 4-hydroxy-tetrahydrodipicolinate synthase (299 aa).

Residue Thr47 participates in pyruvate binding. The active-site Proton donor/acceptor is the Tyr136. Lys164 serves as the catalytic Schiff-base intermediate with substrate. Ala205 contacts pyruvate.

It belongs to the DapA family. As to quaternary structure, homotetramer; dimer of dimers.

It localises to the cytoplasm. It catalyses the reaction L-aspartate 4-semialdehyde + pyruvate = (2S,4S)-4-hydroxy-2,3,4,5-tetrahydrodipicolinate + H2O + H(+). It functions in the pathway amino-acid biosynthesis; L-lysine biosynthesis via DAP pathway; (S)-tetrahydrodipicolinate from L-aspartate: step 3/4. Its function is as follows. Catalyzes the condensation of (S)-aspartate-beta-semialdehyde [(S)-ASA] and pyruvate to 4-hydroxy-tetrahydrodipicolinate (HTPA). The polypeptide is 4-hydroxy-tetrahydrodipicolinate synthase (Pediococcus pentosaceus (strain ATCC 25745 / CCUG 21536 / LMG 10740 / 183-1w)).